The following is a 394-amino-acid chain: NAD(P)H-quinone oxidoreductase subunit H (394 aa).

Belongs to the complex I 49 kDa subunit family. As to quaternary structure, NDH-1 can be composed of about 15 different subunits; different subcomplexes with different compositions have been identified which probably have different functions.

It is found in the cellular thylakoid membrane. The enzyme catalyses a plastoquinone + NADH + (n+1) H(+)(in) = a plastoquinol + NAD(+) + n H(+)(out). It carries out the reaction a plastoquinone + NADPH + (n+1) H(+)(in) = a plastoquinol + NADP(+) + n H(+)(out). NDH-1 shuttles electrons from an unknown electron donor, via FMN and iron-sulfur (Fe-S) centers, to quinones in the respiratory and/or the photosynthetic chain. The immediate electron acceptor for the enzyme in this species is believed to be plastoquinone. Couples the redox reaction to proton translocation, and thus conserves the redox energy in a proton gradient. Cyanobacterial NDH-1 also plays a role in inorganic carbon-concentration. This is NAD(P)H-quinone oxidoreductase subunit H from Picosynechococcus sp. (strain ATCC 27264 / PCC 7002 / PR-6) (Agmenellum quadruplicatum).